The chain runs to 159 residues: Small ribosomal subunit protein uS4 (159 aa).

Residues 106–158 (RRLQTIVYRKGLAKSIYHARQLVVHGHVAVAGRRVTSPGFLVPRDLEDKITLI) form the S4 RNA-binding domain.

The protein belongs to the universal ribosomal protein uS4 family. Part of the 30S ribosomal subunit. Contacts protein S5. The interaction surface between S4 and S5 is involved in control of translational fidelity.

One of the primary rRNA binding proteins, it binds directly to 16S rRNA where it nucleates assembly of the body of the 30S subunit. In terms of biological role, with S5 and S12 plays an important role in translational accuracy. The polypeptide is Small ribosomal subunit protein uS4 (Pyrobaculum islandicum (strain DSM 4184 / JCM 9189 / GEO3)).